We begin with the raw amino-acid sequence, 591 residues long: L-fucose isomerase (591 aa).

Active-site proton acceptor residues include E337 and D361. Mn(2+) is bound by residues E337, D361, and H528.

It belongs to the L-fucose isomerase family. As to quaternary structure, homohexamer. The cofactor is Mn(2+).

Its subcellular location is the cytoplasm. It catalyses the reaction L-fucose = L-fuculose. Its pathway is carbohydrate degradation; L-fucose degradation; L-lactaldehyde and glycerone phosphate from L-fucose: step 1/3. Converts the aldose L-fucose into the corresponding ketose L-fuculose. The chain is L-fucose isomerase from Escherichia coli (strain 55989 / EAEC).